Here is a 280-residue protein sequence, read N- to C-terminus: MLMQIADFEIGLNNPLFLIAGPCVIESEALVMDVAGELKSITQQLDMPFIFKASFDKANRSSHLSYRGPGIEKGLTILEKVKKTLEVPIITDVHEDTPLQEVAAVVDVLQTPAFLCRQSNFIRSVAACGKPVNIKKGQFLAPWEMKQVVAKAWATGNKKIMVCERGYSFGYNNLISDMRALAILRETACPVIFDATHSVQLPGGHGTSSGGQRKFVPVLARAATAAGIAGIFMETHPDPDRALSDGPNSWPLAKMQPLLETLKELDKVVKNAGFLEQSSE.

This sequence belongs to the KdsA family.

The protein resides in the cytoplasm. The enzyme catalyses D-arabinose 5-phosphate + phosphoenolpyruvate + H2O = 3-deoxy-alpha-D-manno-2-octulosonate-8-phosphate + phosphate. It participates in carbohydrate biosynthesis; 3-deoxy-D-manno-octulosonate biosynthesis; 3-deoxy-D-manno-octulosonate from D-ribulose 5-phosphate: step 2/3. The protein operates within bacterial outer membrane biogenesis; lipopolysaccharide biosynthesis. The polypeptide is 2-dehydro-3-deoxyphosphooctonate aldolase (Coxiella burnetii (strain Dugway 5J108-111)).